A 133-amino-acid chain; its full sequence is Putative nickel-responsive regulator (133 aa).

Ni(2+) is bound by residues His74, His85, His87, and Cys93.

The protein belongs to the transcriptional regulatory CopG/NikR family. It depends on Ni(2+) as a cofactor.

In terms of biological role, transcriptional regulator. The protein is Putative nickel-responsive regulator of Saccharolobus islandicus (strain Y.N.15.51 / Yellowstone #2) (Sulfolobus islandicus).